Reading from the N-terminus, the 3779-residue chain is Protein DDB_G0268328 (3779 aa).

12 disordered regions span residues 24–56, 1001–1028, 1137–1165, 1513–1538, 1656–1690, 2027–2054, 2144–2184, 2280–2325, 2508–2527, 2720–2748, 2975–3030, and 3427–3450; these read RQIKSQNKLQNKSQNNGNNNNNKDNNNINKDGS, HEDEEEEGDGDNSNNSNSQDSDGDDDDD, QDSTLPKRKQHGYYHQQQQQQQYHQQQQQ, PTNSIYNNNNNNNNNNNNTNSSSLLS, ETTVLEKETKETKDNNLENNNNNTNNSNNNNNNKE, SNSSNNNNNNNDGSTTSTTTLNRSDSNN, NNNN…NNSS, ISTT…NEQQ, QINNNNNNNEKEEEEEREEG, DGNNNNNNNNNQNNNNQNNNNNQNNNDSS, ESND…DSIK, and QSNTLNGTGGGGGNGGGNNGSGKL. Low complexity-rich tracts occupy residues 26-56, 1011-1020, 1149-1165, and 1515-1538; these read IKSQNKLQNKSQNNGNNNNNKDNNNINKDGS, DNSNNSNSQD, YYHQQQQQQQYHQQQQQ, and NSIYNNNNNNNNNNNNTNSSSLLS. Residues 1656-1671 are compositionally biased toward basic and acidic residues; it reads ETTVLEKETKETKDNN. Residues 1672 to 1687 are compositionally biased toward low complexity; that stretch reads LENNNNNTNNSNNNNN. Low complexity-rich tracts occupy residues 2144-2182 and 2285-2322; these read NNNNNNNNNNNNNNNNNNNNNNNNNNNNNNNNNNNNNNN and NNNNNNNNNNNNNNNNNNNNNNNNNNNNNNNNNNNNNN. Low complexity-rich tracts occupy residues 2722 to 2745 and 3015 to 3030; these read NNNNNNNNNQNNNNQNNNNNQNNN and SVNNNNNNNSNSDSIK. Gly residues predominate over residues 3433 to 3446; sequence GTGGGGGNGGGNNG.

The chain is Protein DDB_G0268328 from Dictyostelium discoideum (Social amoeba).